The following is a 297-amino-acid chain: UDP-N-acetylenolpyruvoylglucosamine reductase (297 aa).

The FAD-binding PCMH-type domain occupies glutamine 18–glycine 184. Arginine 163 is a catalytic residue. Serine 214 (proton donor) is an active-site residue. Residue glutamate 285 is part of the active site.

The cofactor is FAD.

It is found in the cytoplasm. The enzyme catalyses UDP-N-acetyl-alpha-D-muramate + NADP(+) = UDP-N-acetyl-3-O-(1-carboxyvinyl)-alpha-D-glucosamine + NADPH + H(+). The protein operates within cell wall biogenesis; peptidoglycan biosynthesis. Cell wall formation. In Gloeobacter violaceus (strain ATCC 29082 / PCC 7421), this protein is UDP-N-acetylenolpyruvoylglucosamine reductase.